Here is a 398-residue protein sequence, read N- to C-terminus: Phosphoglycerate kinase (398 aa).

Residues 21–23 (DFN), Arg36, 59–62 (HLGR), Arg119, and Arg157 contribute to the substrate site. ATP is bound by residues Lys208, Gly296, Glu327, and 354–357 (GGDS).

The protein belongs to the phosphoglycerate kinase family. As to quaternary structure, monomer.

The protein localises to the cytoplasm. The enzyme catalyses (2R)-3-phosphoglycerate + ATP = (2R)-3-phospho-glyceroyl phosphate + ADP. The protein operates within carbohydrate degradation; glycolysis; pyruvate from D-glyceraldehyde 3-phosphate: step 2/5. In Streptococcus pyogenes serotype M3 (strain ATCC BAA-595 / MGAS315), this protein is Phosphoglycerate kinase.